A 372-amino-acid chain; its full sequence is tRNA pseudouridine synthase D (372 aa).

The active-site Nucleophile is the Asp85. Residues Gly160–Gly330 form the TRUD domain.

It belongs to the pseudouridine synthase TruD family.

The catalysed reaction is uridine(13) in tRNA = pseudouridine(13) in tRNA. Functionally, responsible for synthesis of pseudouridine from uracil-13 in transfer RNAs. The sequence is that of tRNA pseudouridine synthase D from Campylobacter jejuni subsp. jejuni serotype O:23/36 (strain 81-176).